We begin with the raw amino-acid sequence, 605 residues long: DNA primase (605 aa).

Residues 38–62 form a CHC2-type zinc finger; it reads CPFHDEKTPSFTVSEDKQICHCFGC. Residues 260–341 enclose the Toprim domain; the sequence is DEIVLLEGFM…NVFVIQLPSG (82 aa). E266, D310, and D312 together coordinate Mg(2+).

It belongs to the DnaG primase family. Monomer. Interacts with DnaB. Requires Zn(2+) as cofactor. The cofactor is Mg(2+).

The catalysed reaction is ssDNA + n NTP = ssDNA/pppN(pN)n-1 hybrid + (n-1) diphosphate.. RNA polymerase that catalyzes the synthesis of short RNA molecules used as primers for DNA polymerase during DNA replication. The protein is DNA primase of Staphylococcus aureus (strain MW2).